A 956-amino-acid chain; its full sequence is MAM domain-containing glycosylphosphatidylinositol anchor protein 2 (956 aa).

The N-terminal stretch at 1–25 is a signal peptide; the sequence is MDLLYGLVWLLTVLLEGISGQGVYA. Ig-like domains lie at 27 to 127 and 134 to 232; these read PTVR…IRVD and PVVT…KMVS. Disulfide bonds link Cys-62-Cys-110 and Cys-159-Cys-216. Asn-92, Asn-213, and Asn-237 each carry an N-linked (GlcNAc...) asparagine glycan. Ig-like domains are found at residues 242 to 328, 340 to 436, 442 to 533, and 540 to 627; these read PSIK…NIIV, PDPY…VNIS, PNLT…ALVQ, and PAVE…FLVT. Intrachain disulfides connect Cys-264–Cys-310 and Cys-359–Cys-417. N-linked (GlcNAc...) asparagine glycosylation is found at Asn-434, Asn-443, Asn-504, Asn-610, and Asn-703. 2 cysteine pairs are disulfide-bonded: Cys-465–Cys-515 and Cys-561–Cys-611. Residues 638 to 739 enclose the Fibronectin type-III domain; that stretch reads DTYNPVWQNR…IRVIKYSAPV (102 aa). An MAM domain is found at 746-921; sequence FHCGFEDGNI…VSIAEGECAK (176 aa). The GPI-anchor amidated aspartate moiety is linked to residue Asp-931. A propeptide spans 932-956 (removed in mature form); the sequence is GAVGILVHIWLFPIIVLISILSPRR.

Interacts (through the Ig-like domains) with NLGN2. In terms of tissue distribution, detected in Leydig cells, syncytiotrophoblast, duodenal villi epithelial cells and neutrophils from kidney and cutaneous squamous cell carcinoma (at protein level).

Its subcellular location is the cell membrane. In terms of biological role, may be involved in cell-cell interactions. This Homo sapiens (Human) protein is MAM domain-containing glycosylphosphatidylinositol anchor protein 2 (MDGA2).